Consider the following 397-residue polypeptide: Dual-specificity RNA methyltransferase RlmN (397 aa).

The active-site Proton acceptor is glutamate 120. The region spanning 126–369 is the Radical SAM core domain; it reads ETDRGTLCVS…VRTPRGRDIL (244 aa). Cysteine 133 and cysteine 372 are oxidised to a cystine. Positions 140, 144, and 147 each coordinate [4Fe-4S] cluster. S-adenosyl-L-methionine-binding positions include 198 to 199, serine 230, 252 to 254, and asparagine 329; these read GE and SLH. The active-site S-methylcysteine intermediate is cysteine 372.

It belongs to the radical SAM superfamily. RlmN family. [4Fe-4S] cluster is required as a cofactor.

It is found in the cytoplasm. It carries out the reaction adenosine(2503) in 23S rRNA + 2 reduced [2Fe-2S]-[ferredoxin] + 2 S-adenosyl-L-methionine = 2-methyladenosine(2503) in 23S rRNA + 5'-deoxyadenosine + L-methionine + 2 oxidized [2Fe-2S]-[ferredoxin] + S-adenosyl-L-homocysteine. It catalyses the reaction adenosine(37) in tRNA + 2 reduced [2Fe-2S]-[ferredoxin] + 2 S-adenosyl-L-methionine = 2-methyladenosine(37) in tRNA + 5'-deoxyadenosine + L-methionine + 2 oxidized [2Fe-2S]-[ferredoxin] + S-adenosyl-L-homocysteine. In terms of biological role, specifically methylates position 2 of adenine 2503 in 23S rRNA and position 2 of adenine 37 in tRNAs. m2A2503 modification seems to play a crucial role in the proofreading step occurring at the peptidyl transferase center and thus would serve to optimize ribosomal fidelity. The polypeptide is Dual-specificity RNA methyltransferase RlmN (Nitrobacter winogradskyi (strain ATCC 25391 / DSM 10237 / CIP 104748 / NCIMB 11846 / Nb-255)).